The chain runs to 102 residues: Pole-localizer protein TmaR (102 aa).

Residues 7–34 (IINQARRKNKLKRELQDNQKKIRDNQKR) adopt a coiled-coil conformation.

It belongs to the pole-localizer TmaR family.

The protein resides in the cytoplasm. Pole-localizer protein involved in the regulation of several cellular processes. This Aliivibrio salmonicida (strain LFI1238) (Vibrio salmonicida (strain LFI1238)) protein is Pole-localizer protein TmaR.